We begin with the raw amino-acid sequence, 1339 residues long: Inhibitor of Bruton tyrosine kinase (1339 aa).

3 ANK repeats span residues F51 to V81, S86 to I115, and D119 to F154. RCC1 repeat units follow at residues P142 to Q195, K196 to E247, and G249 to K302. A BTB 1 domain is found at H555–L636. A disordered region spans residues E685–T704. Residues G689–R698 show a composition bias toward basic residues. Residues Y758 to K826 enclose the BTB 2 domain. The span at S970–K980 shows a compositional bias: basic residues. 3 disordered regions span residues S970–I993, R1058–T1089, and F1208–L1237. Residues D1214–R1231 show a composition bias toward basic and acidic residues.

It is found in the cytoplasm. The protein resides in the membrane. Acts as an inhibitor of BTK tyrosine kinase activity, thereby playing a role in B-cell development. This chain is Inhibitor of Bruton tyrosine kinase (ibtk), found in Xenopus laevis (African clawed frog).